Consider the following 390-residue polypeptide: Uroporphyrinogen decarboxylase 2, chloroplastic (390 aa).

The N-terminal 30 residues, 1 to 30 (MATACPPLSLQPAYLSGRSARARRPPPAVR), are a transit peptide targeting the chloroplast. Substrate contacts are provided by residues 70–74 (RQAGR), phenylalanine 89, serine 119, aspartate 120, tyrosine 197, serine 252, and histidine 367.

It belongs to the uroporphyrinogen decarboxylase family. Homodimer.

It localises to the plastid. Its subcellular location is the chloroplast. The catalysed reaction is uroporphyrinogen III + 4 H(+) = coproporphyrinogen III + 4 CO2. It functions in the pathway porphyrin-containing compound metabolism; protoporphyrin-IX biosynthesis; coproporphyrinogen-III from 5-aminolevulinate: step 4/4. Functionally, catalyzes the decarboxylation of four acetate groups of uroporphyrinogen-III to yield coproporphyrinogen-III. In Oryza sativa subsp. japonica (Rice), this protein is Uroporphyrinogen decarboxylase 2, chloroplastic.